The sequence spans 572 residues: Urease subunit alpha (572 aa).

The Urease domain maps to 133–572 (GGIDLHVHYI…TSLSQRYFLF (440 aa)). Ni(2+) contacts are provided by His-138, His-140, and Lys-221. An N6-carboxylysine modification is found at Lys-221. His-223 provides a ligand contact to substrate. Residues His-250 and His-276 each contribute to the Ni(2+) site. His-324 serves as the catalytic Proton donor. Asp-364 lines the Ni(2+) pocket.

This sequence belongs to the metallo-dependent hydrolases superfamily. Urease alpha subunit family. Heterotrimer of UreA (gamma), UreB (beta) and UreC (alpha) subunits. Three heterotrimers associate to form the active enzyme. It depends on Ni cation as a cofactor. Carboxylation allows a single lysine to coordinate two nickel ions.

It localises to the cytoplasm. The catalysed reaction is urea + 2 H2O + H(+) = hydrogencarbonate + 2 NH4(+). It participates in nitrogen metabolism; urea degradation; CO(2) and NH(3) from urea (urease route): step 1/1. Ureolysis may allow urea to be employed as a nitrogen source for growth and produces ammonia which may protect from killing at low pH. In Streptococcus salivarius (strain 57.I), this protein is Urease subunit alpha.